Here is a 132-residue protein sequence, read N- to C-terminus: Proline-rich protein sgp2 (132 aa).

The N-terminal stretch at 1-20 (MKYCFVFFVTLICLIANCSA) is a signal peptide. 2 disordered regions span residues 23 to 62 (EGDK…SNSR) and 87 to 132 (GASV…LGLP). Basic and acidic residues predominate over residues 36–47 (KQIERASDKTSE). Positions 51 to 62 (GNTNAQGDSNSR) are enriched in polar residues. Low complexity predominate over residues 91 to 105 (PQLPDLPTTPSLPDM).

It is found in the secreted. This Glossina morsitans morsitans (Savannah tsetse fly) protein is Proline-rich protein sgp2 (sgp2).